A 213-amino-acid polypeptide reads, in one-letter code: Octanoyltransferase (213 aa).

One can recognise a BPL/LPL catalytic domain in the interval 35–213; it reads DKHGDAVLLL…ERHLPTLVGA (179 aa). Substrate contacts are provided by residues 73–80, 145–147, and 158–160; these read RGGKITWH, AIG, and GFS. Cys176 (acyl-thioester intermediate) is an active-site residue.

This sequence belongs to the LipB family.

Its subcellular location is the cytoplasm. It catalyses the reaction octanoyl-[ACP] + L-lysyl-[protein] = N(6)-octanoyl-L-lysyl-[protein] + holo-[ACP] + H(+). It functions in the pathway protein modification; protein lipoylation via endogenous pathway; protein N(6)-(lipoyl)lysine from octanoyl-[acyl-carrier-protein]: step 1/2. Its function is as follows. Catalyzes the transfer of endogenously produced octanoic acid from octanoyl-acyl-carrier-protein onto the lipoyl domains of lipoate-dependent enzymes. Lipoyl-ACP can also act as a substrate although octanoyl-ACP is likely to be the physiological substrate. This Salinispora arenicola (strain CNS-205) protein is Octanoyltransferase.